Consider the following 829-residue polypeptide: uncharacterized protein (829 aa).

It belongs to the IIV-6 050L family.

This is an uncharacterized protein from Invertebrate iridescent virus 3 (IIV-3).